A 140-amino-acid chain; its full sequence is Large ribosomal subunit protein uL11 (140 aa).

Belongs to the universal ribosomal protein uL11 family. As to quaternary structure, part of the ribosomal stalk of the 50S ribosomal subunit. Interacts with L10 and the large rRNA to form the base of the stalk. L10 forms an elongated spine to which L12 dimers bind in a sequential fashion forming a multimeric L10(L12)X complex. Post-translationally, one or more lysine residues are methylated.

In terms of biological role, forms part of the ribosomal stalk which helps the ribosome interact with GTP-bound translation factors. The protein is Large ribosomal subunit protein uL11 of Caldanaerobacter subterraneus subsp. tengcongensis (strain DSM 15242 / JCM 11007 / NBRC 100824 / MB4) (Thermoanaerobacter tengcongensis).